Consider the following 550-residue polypeptide: CCR4-NOT transcription complex subunit 6-like-B (550 aa).

The interval 1–148 (MPKEKYDPPD…LYQEPDGMRK (148 aa)) is required for interaction with cnot1, cnot3 and cnot7. 4 LRR repeats span residues 52 to 73 (HLTV…IAKL), 75 to 96 (NLVY…LGNV), 98 to 120 (SLRE…GRLF), and 121 to 143 (RLQT…YQEP). Positions 153–550 (MLDNLSVHPE…INGVHLPSRR (398 aa)) are nuclease domain. Mg(2+) is bound at residue E235. Substrate is bound by residues E235, E271, H355, and P360. D405 is a Mg(2+) binding site. D405 serves as the catalytic Proton donor/acceptor. Residues N407, N474, and F479 each coordinate substrate.

This sequence belongs to the CCR4/nocturin family. As to quaternary structure, component of the CCR4-NOT complex. It depends on Mg(2+) as a cofactor.

It localises to the cytoplasm. Its subcellular location is the nucleus. It catalyses the reaction Exonucleolytic cleavage of poly(A) to 5'-AMP.. Its function is as follows. Poly(A) nuclease with 3'-5' RNase activity. Catalytic component of the CCR4-NOT complex which is one of the major cellular mRNA deadenylases and is linked to various cellular processes including bulk mRNA degradation, miRNA-mediated repression, translational repression during translational initiation and general transcription regulation. Additional complex functions may be a consequence of its influence on mRNA expression. In Xenopus laevis (African clawed frog), this protein is CCR4-NOT transcription complex subunit 6-like-B (cnot6l-b).